Here is a 445-residue protein sequence, read N- to C-terminus: 8-amino-7-oxononanoate synthase (445 aa).

R40 provides a ligand contact to substrate. A pyridoxal 5'-phosphate-binding site is contributed by 131–132; the sequence is GY. H156 provides a ligand contact to substrate. 3 residues coordinate pyridoxal 5'-phosphate: S202, H230, and T258. The residue at position 261 (K261) is an N6-(pyridoxal phosphate)lysine. T377 is a binding site for substrate. A disordered region spans residues 408-445; it reads ASEGQTRRDAEQPPRSLRSLPPEGAAASLGAARRETAA.

The protein belongs to the class-II pyridoxal-phosphate-dependent aminotransferase family. BioF subfamily. Homodimer. Pyridoxal 5'-phosphate is required as a cofactor.

The catalysed reaction is 6-carboxyhexanoyl-[ACP] + L-alanine + H(+) = (8S)-8-amino-7-oxononanoate + holo-[ACP] + CO2. It participates in cofactor biosynthesis; biotin biosynthesis. Catalyzes the decarboxylative condensation of pimeloyl-[acyl-carrier protein] and L-alanine to produce 8-amino-7-oxononanoate (AON), [acyl-carrier protein], and carbon dioxide. The sequence is that of 8-amino-7-oxononanoate synthase from Burkholderia ambifaria (strain MC40-6).